We begin with the raw amino-acid sequence, 149 residues long: uncharacterized protein (149 aa).

A run of 2 helical transmembrane segments spans residues 91–111 and 122–142; these read IFIL…LFHY and ISIL…ICLL.

The protein resides in the membrane. This is an uncharacterized protein from Dictyostelium discoideum (Social amoeba).